The chain runs to 598 residues: Sulfoacetaldehyde acetyltransferase (598 aa).

The protein belongs to the TPP enzyme family. In terms of assembly, homotetramer. Mg(2+) serves as cofactor. The cofactor is thiamine diphosphate.

The protein localises to the cytoplasm. It catalyses the reaction acetyl phosphate + sulfite + H(+) = sulfoacetaldehyde + phosphate. It functions in the pathway organosulfur degradation; taurine degradation via aerobic pathway; acetyl phosphate and sulfite from taurine: step 2/2. This Castellaniella defragrans (Alcaligenes defragrans) protein is Sulfoacetaldehyde acetyltransferase.